A 252-amino-acid chain; its full sequence is Triosephosphate isomerase (252 aa).

Asn10–Lys12 provides a ligand contact to substrate. The Electrophile role is filled by His96. Catalysis depends on Glu168, which acts as the Proton acceptor. Residues Gly174, Ser213, and Gly234–Gly235 each bind substrate.

This sequence belongs to the triosephosphate isomerase family. As to quaternary structure, homodimer.

It localises to the cytoplasm. The enzyme catalyses D-glyceraldehyde 3-phosphate = dihydroxyacetone phosphate. The protein operates within carbohydrate biosynthesis; gluconeogenesis. Its pathway is carbohydrate degradation; glycolysis; D-glyceraldehyde 3-phosphate from glycerone phosphate: step 1/1. Its function is as follows. Involved in the gluconeogenesis. Catalyzes stereospecifically the conversion of dihydroxyacetone phosphate (DHAP) to D-glyceraldehyde-3-phosphate (G3P). The protein is Triosephosphate isomerase of Idiomarina loihiensis (strain ATCC BAA-735 / DSM 15497 / L2-TR).